The sequence spans 367 residues: Peptide chain release factor 2 (367 aa).

Gln-254 bears the N5-methylglutamine mark.

The protein belongs to the prokaryotic/mitochondrial release factor family. Post-translationally, methylated by PrmC. Methylation increases the termination efficiency of RF2.

The protein resides in the cytoplasm. In terms of biological role, peptide chain release factor 2 directs the termination of translation in response to the peptide chain termination codons UGA and UAA. This Acidovorax ebreus (strain TPSY) (Diaphorobacter sp. (strain TPSY)) protein is Peptide chain release factor 2.